Reading from the N-terminus, the 48-residue chain is Large ribosomal subunit protein bL33 (48 aa).

Belongs to the bacterial ribosomal protein bL33 family.

The polypeptide is Large ribosomal subunit protein bL33 (Streptococcus mutans serotype c (strain ATCC 700610 / UA159)).